A 149-amino-acid chain; its full sequence is Nucleoside diphosphate kinase (149 aa).

The ATP site is built by Lys9, Phe57, Arg85, Thr91, Arg102, and Asn112. His115 serves as the catalytic Pros-phosphohistidine intermediate.

The protein belongs to the NDK family. In terms of assembly, homotetramer. The cofactor is Mg(2+).

Its subcellular location is the cytoplasm. It carries out the reaction dZDP + ATP = dZTP + ADP. The enzyme catalyses a 2'-deoxyribonucleoside 5'-diphosphate + ATP = a 2'-deoxyribonucleoside 5'-triphosphate + ADP. It catalyses the reaction a ribonucleoside 5'-diphosphate + ATP = a ribonucleoside 5'-triphosphate + ADP. Its pathway is purine metabolism. Functionally, major role in the synthesis of nucleoside triphosphates other than ATP. The ATP gamma phosphate is transferred to the NDP beta phosphate via a ping-pong mechanism, using a phosphorylated active-site intermediate. (Microbial infection) Catalyzes the phosphorylation of dZDP to dZTP, when the bacterium is infected by a phage that produces the substrate for the synthesis of dZTP (2- amino-2'-deoxyadenosine 5'-triphosphate), which is then used by the phage as a DNA polymerase substrate. The sequence is that of Nucleoside diphosphate kinase from Synechococcus elongatus (strain ATCC 33912 / PCC 7942 / FACHB-805) (Anacystis nidulans R2).